A 401-amino-acid chain; its full sequence is L-threonine ammonia-lyase (401 aa).

Lys51 is modified (N6-(pyridoxal phosphate)lysine). Residues Asn78, 178-181 (GGGL), and Ser301 each bind pyridoxal 5'-phosphate. The ACT domain occupies 326–401 (FIETFVMDRP…AKGYEVRIVG (76 aa)).

This sequence belongs to the serine/threonine dehydratase family. Homotetramer. Pyridoxal 5'-phosphate is required as a cofactor.

It carries out the reaction L-threonine = 2-oxobutanoate + NH4(+). The catalysed reaction is L-serine = pyruvate + NH4(+). Its pathway is amino-acid biosynthesis; L-isoleucine biosynthesis; 2-oxobutanoate from L-threonine: step 1/1. Activity is insensitive to allosteric regulators L-valine and L-isoleucine at low concentrations, while these L-amino acids are inhibitors at high concentrations. Is insensitive to ammonium chloride and AMP. Inhibited in the presence of aminoxyacetic acid (AOAA), an inhibitor of pyridoxal phosphate-dependent enzymes. Catalyzes the conversion of L-threonine to 2-oxobutanoate and ammonia. Can also use L-serine, but the catalytic efficiency toward L-threonine is about sixfold higher than that toward L-serine. Also shows weak activity toward L-allo-threonine, but cannot use the corresponding D-amino acids. Does not exhibit racemase activity toward various amino acids, including serine. Physiologically, is likely involved in the threonine-dependent pathway of isoleucine biosynthesis. The chain is L-threonine ammonia-lyase from Thermotoga maritima (strain ATCC 43589 / DSM 3109 / JCM 10099 / NBRC 100826 / MSB8).